Here is a 502-residue protein sequence, read N- to C-terminus: UPF0371 protein CLJ_B0384 (502 aa).

Belongs to the UPF0371 family.

This Clostridium botulinum (strain 657 / Type Ba4) protein is UPF0371 protein CLJ_B0384.